The primary structure comprises 264 residues: tRNA (guanine-N(1)-)-methyltransferase (264 aa).

Residues Gly-125 and 145 to 150 contribute to the S-adenosyl-L-methionine site; that span reads LGDFVL.

Belongs to the RNA methyltransferase TrmD family. In terms of assembly, homodimer.

Its subcellular location is the cytoplasm. The catalysed reaction is guanosine(37) in tRNA + S-adenosyl-L-methionine = N(1)-methylguanosine(37) in tRNA + S-adenosyl-L-homocysteine + H(+). Its function is as follows. Specifically methylates guanosine-37 in various tRNAs. This Burkholderia mallei (strain NCTC 10247) protein is tRNA (guanine-N(1)-)-methyltransferase.